The sequence spans 331 residues: Ketol-acid reductoisomerase (NADP(+)) (331 aa).

A KARI N-terminal Rossmann domain is found at 2–182 (ARLYYDADAN…GGTRAGILET (181 aa)). NADP(+)-binding positions include 25 to 28 (YGSQ), serine 51, serine 53, and 83 to 86 (DEVQ). The active site involves histidine 108. Position 134 (glycine 134) interacts with NADP(+). Residues 183-328 (TFREETETDL…KDLRAMFSWL (146 aa)) form the KARI C-terminal knotted domain. Mg(2+)-binding residues include aspartate 191, glutamate 195, glutamate 227, and glutamate 231. Position 252 (serine 252) interacts with substrate.

This sequence belongs to the ketol-acid reductoisomerase family. The cofactor is Mg(2+).

It carries out the reaction (2R)-2,3-dihydroxy-3-methylbutanoate + NADP(+) = (2S)-2-acetolactate + NADPH + H(+). The catalysed reaction is (2R,3R)-2,3-dihydroxy-3-methylpentanoate + NADP(+) = (S)-2-ethyl-2-hydroxy-3-oxobutanoate + NADPH + H(+). The protein operates within amino-acid biosynthesis; L-isoleucine biosynthesis; L-isoleucine from 2-oxobutanoate: step 2/4. Its pathway is amino-acid biosynthesis; L-valine biosynthesis; L-valine from pyruvate: step 2/4. Functionally, involved in the biosynthesis of branched-chain amino acids (BCAA). Catalyzes an alkyl-migration followed by a ketol-acid reduction of (S)-2-acetolactate (S2AL) to yield (R)-2,3-dihydroxy-isovalerate. In the isomerase reaction, S2AL is rearranged via a Mg-dependent methyl migration to produce 3-hydroxy-3-methyl-2-ketobutyrate (HMKB). In the reductase reaction, this 2-ketoacid undergoes a metal-dependent reduction by NADPH to yield (R)-2,3-dihydroxy-isovalerate. The sequence is that of Ketol-acid reductoisomerase (NADP(+)) from Cyanothece sp. (strain PCC 7425 / ATCC 29141).